A 161-amino-acid polypeptide reads, in one-letter code: 2-C-methyl-D-erythritol 2,4-cyclodiphosphate synthase (161 aa).

A divalent metal cation is bound by residues D8 and H10. Residues D8–H10 and H34–S35 each bind 4-CDP-2-C-methyl-D-erythritol 2-phosphate. H42 is a binding site for a divalent metal cation. 4-CDP-2-C-methyl-D-erythritol 2-phosphate-binding positions include D56 to G58, A100 to L106, and R142.

Belongs to the IspF family. Homotrimer. A divalent metal cation serves as cofactor.

The enzyme catalyses 4-CDP-2-C-methyl-D-erythritol 2-phosphate = 2-C-methyl-D-erythritol 2,4-cyclic diphosphate + CMP. It functions in the pathway isoprenoid biosynthesis; isopentenyl diphosphate biosynthesis via DXP pathway; isopentenyl diphosphate from 1-deoxy-D-xylulose 5-phosphate: step 4/6. In terms of biological role, involved in the biosynthesis of isopentenyl diphosphate (IPP) and dimethylallyl diphosphate (DMAPP), two major building blocks of isoprenoid compounds. Catalyzes the conversion of 4-diphosphocytidyl-2-C-methyl-D-erythritol 2-phosphate (CDP-ME2P) to 2-C-methyl-D-erythritol 2,4-cyclodiphosphate (ME-CPP) with a corresponding release of cytidine 5-monophosphate (CMP). This chain is 2-C-methyl-D-erythritol 2,4-cyclodiphosphate synthase, found in Buchnera aphidicola subsp. Acyrthosiphon pisum (strain 5A).